A 199-amino-acid chain; its full sequence is ATP-dependent Clp protease proteolytic subunit 3 (199 aa).

Ser101 serves as the catalytic Nucleophile. The active site involves His126.

The protein belongs to the peptidase S14 family. As to quaternary structure, fourteen ClpP subunits assemble into 2 heptameric rings which stack back to back to give a disk-like structure with a central cavity, resembling the structure of eukaryotic proteasomes.

It is found in the cytoplasm. It carries out the reaction Hydrolysis of proteins to small peptides in the presence of ATP and magnesium. alpha-casein is the usual test substrate. In the absence of ATP, only oligopeptides shorter than five residues are hydrolyzed (such as succinyl-Leu-Tyr-|-NHMec, and Leu-Tyr-Leu-|-Tyr-Trp, in which cleavage of the -Tyr-|-Leu- and -Tyr-|-Trp bonds also occurs).. Functionally, cleaves peptides in various proteins in a process that requires ATP hydrolysis. Has a chymotrypsin-like activity. Plays a major role in the degradation of misfolded proteins. The polypeptide is ATP-dependent Clp protease proteolytic subunit 3 (Synechococcus elongatus (strain ATCC 33912 / PCC 7942 / FACHB-805) (Anacystis nidulans R2)).